Here is a 223-residue protein sequence, read N- to C-terminus: Uracil-DNA glycosylase (223 aa).

Asp-67 acts as the Proton acceptor in catalysis.

The protein belongs to the uracil-DNA glycosylase (UDG) superfamily. UNG family.

Its subcellular location is the cytoplasm. The catalysed reaction is Hydrolyzes single-stranded DNA or mismatched double-stranded DNA and polynucleotides, releasing free uracil.. Functionally, excises uracil residues from the DNA which can arise as a result of misincorporation of dUMP residues by DNA polymerase or due to deamination of cytosine. The chain is Uracil-DNA glycosylase from Borreliella burgdorferi (strain ZS7) (Borrelia burgdorferi).